Here is a 103-residue protein sequence, read N- to C-terminus: Small ribosomal subunit protein uS10 (103 aa).

It belongs to the universal ribosomal protein uS10 family. In terms of assembly, part of the 30S ribosomal subunit.

In terms of biological role, involved in the binding of tRNA to the ribosomes. In Helicobacter hepaticus (strain ATCC 51449 / 3B1), this protein is Small ribosomal subunit protein uS10.